Reading from the N-terminus, the 1098-residue chain is Protein diaphanous homolog 2 (1098 aa).

The residue at position 1 (Met1) is an N-acetylmethionine. Residues 1–62 (MEELGAAASG…SFRKSATKRE (62 aa)) form a disordered region. Residues 36-52 (ANEEETRNKPKLRDRIT) are compositionally biased toward basic and acidic residues. The 374-residue stretch at 90–463 (SLILSEKEVL…QIVLHCSGMD (374 aa)) folds into the GBD/FH3 domain. 2 coiled-coil regions span residues 375-416 (QLRV…NMLK) and 490-539 (EENE…GQGV). 5 disordered regions span residues 537–565 (QGVP…PPPP), 578–611 (PPPP…GVFP), 679–699 (MKGQ…PKKK), 1007–1047 (HKRK…NKEG), and 1063–1098 (GAAF…MSSK). Composition is skewed to pro residues over residues 543-565 (IPGP…PPPP) and 578-608 (PPPP…PPGG). Residues 544-620 (PGPPPPPPLP…PLLSGPIELP (77 aa)) form the FH1 domain. The FH2 domain maps to 625–1025 (QKKLYKPDIP…SRRAKLAKEK (401 aa)). A coiled-coil region spans residues 999–1050 (FLEALKENHKRKEMEEKSRRAKLAKEKAEQEKLERQKKKKQLIDINKEGDET). 2 stretches are compositionally biased toward basic and acidic residues: residues 1007–1032 (HKRK…EKLE) and 1075–1087 (RNPD…LERS). The DAD domain maps to 1048-1078 (DETGVMDNLLEALQSGAAFRDRRKRIPRNPD).

Belongs to the formin homology family. Diaphanous subfamily. As to quaternary structure, interacts with MAPRE1 and APC.

In terms of biological role, may be involved in oogenesis. The polypeptide is Protein diaphanous homolog 2 (Diaph2) (Mus musculus (Mouse)).